Reading from the N-terminus, the 154-residue chain is NADPH-dependent 7-cyano-7-deazaguanine reductase (154 aa).

Positions 1–11 are enriched in basic and acidic residues; sequence MAKKPVKDLKQ. A disordered region spans residues 1–31; the sequence is MAKKPVKDLKQLGHATPVPASPEEATLERVP. Catalysis depends on Cys-52, which acts as the Thioimide intermediate. Asp-59 acts as the Proton donor in catalysis. Substrate-binding positions include 74–76 and 93–94; these read IES and HE.

This sequence belongs to the GTP cyclohydrolase I family. QueF type 1 subfamily.

It is found in the cytoplasm. It carries out the reaction 7-aminomethyl-7-carbaguanine + 2 NADP(+) = 7-cyano-7-deazaguanine + 2 NADPH + 3 H(+). It participates in tRNA modification; tRNA-queuosine biosynthesis. In terms of biological role, catalyzes the NADPH-dependent reduction of 7-cyano-7-deazaguanine (preQ0) to 7-aminomethyl-7-deazaguanine (preQ1). This chain is NADPH-dependent 7-cyano-7-deazaguanine reductase, found in Parvibaculum lavamentivorans (strain DS-1 / DSM 13023 / NCIMB 13966).